The sequence spans 595 residues: Merlin (595 aa).

S13 is subject to Phosphoserine. The FERM domain occupies 22 to 311 (FTVRIVTMDA…GNHDLFMRRR (290 aa)). S518 is modified (phosphoserine; by PAK).

In terms of assembly, interacts with NHERF1, HGS and AGAP2. Interacts with SGSM3. Interacts (via FERM domain) with MPP1. Interacts with LAYN and WWC1. Interacts with the CUL4A-RBX1-DDB1-VprBP/DCAF1 E3 ubiquitin-protein ligase complex. The unphosphorylated form interacts (via FERM domain) with VPRBP/DCAF1. Interacts (via FERM domain) with NOP53; the interaction is direct. Interacts with SCHIP1; the interaction is direct. Post-translationally, phosphorylation of Ser-518 inhibits nuclear localization by disrupting the intramolecular association of the FERM domain with the C-terminal tail. In terms of processing, ubiquitinated by the CUL4A-RBX1-DDB1-DCAF1/VprBP E3 ubiquitin-protein ligase complex for ubiquitination and subsequent proteasome-dependent degradation. Phosphorylation of Ser-518 inhibits nuclear localization by disrupting the intramolecular association of the FERM domain with the C-terminal tail. The dephosphorylation of Ser-518 favors the interaction with NOP53.

Its subcellular location is the cell membrane. It localises to the cell projection. The protein localises to the cytoplasm. It is found in the cytoskeleton. The protein resides in the nucleus. Its function is as follows. Probable regulator of the Hippo/SWH (Sav/Wts/Hpo) signaling pathway, a signaling pathway that plays a pivotal role in tumor suppression by restricting proliferation and promoting apoptosis. Along with WWC1 can synergistically induce the phosphorylation of LATS1 and LATS2 and can probably function in the regulation of the Hippo/SWH (Sav/Wts/Hpo) signaling pathway. May act as a membrane stabilizing protein. May inhibit PI3 kinase by binding to AGAP2 and impairing its stimulating activity. Suppresses cell proliferation and tumorigenesis by inhibiting the CUL4A-RBX1-DDB1-VprBP/DCAF1 E3 ubiquitin-protein ligase complex. This is Merlin (NF2) from Papio anubis (Olive baboon).